The sequence spans 780 residues: Subtilisin-like protease SBT5.1 (780 aa).

An N-terminal signal peptide occupies residues 1–25; the sequence is MMRCLTITIMFFMFFFLSVIQKCKS. The propeptide at 26-106 is activation peptide; sequence ETSKSGDYII…VFPDQMLQLH (81 aa). An Inhibitor I9 domain is found at 33-106; the sequence is YIIYMGAASS…VFPDQMLQLH (74 aa). Residues 110-617 enclose the Peptidase S8 domain; it reads SWDFLVQESY…AGQVTIFGPS (508 aa). Residue Asp-147 is the Charge relay system of the active site. The N-linked (GlcNAc...) asparagine glycan is linked to Asn-197. The Charge relay system role is filled by His-215. N-linked (GlcNAc...) asparagine glycosylation is present at Asn-230. The region spanning 385–469 is the PA domain; that stretch reads IDANEEAARN…PEDGIQIMSY (85 aa). A glycan (N-linked (GlcNAc...) asparagine) is linked at Asn-471. Ser-550 serves as the catalytic Charge relay system. N-linked (GlcNAc...) asparagine glycosylation occurs at Asn-776.

It belongs to the peptidase S8 family.

The protein resides in the secreted. This Arabidopsis thaliana (Mouse-ear cress) protein is Subtilisin-like protease SBT5.1.